The chain runs to 310 residues: Methionyl-tRNA formyltransferase (310 aa).

109 to 112 (SLLP) lines the (6S)-5,6,7,8-tetrahydrofolate pocket.

This sequence belongs to the Fmt family.

The catalysed reaction is L-methionyl-tRNA(fMet) + (6R)-10-formyltetrahydrofolate = N-formyl-L-methionyl-tRNA(fMet) + (6S)-5,6,7,8-tetrahydrofolate + H(+). In terms of biological role, attaches a formyl group to the free amino group of methionyl-tRNA(fMet). The formyl group appears to play a dual role in the initiator identity of N-formylmethionyl-tRNA by promoting its recognition by IF2 and preventing the misappropriation of this tRNA by the elongation apparatus. This Pseudomonas paraeruginosa (strain DSM 24068 / PA7) (Pseudomonas aeruginosa (strain PA7)) protein is Methionyl-tRNA formyltransferase.